The sequence spans 212 residues: Hydroxyacylglutathione hydrolase GloC (212 aa).

Residues histidine 55, histidine 57, aspartate 59, histidine 60, histidine 132, aspartate 151, and histidine 192 each coordinate Zn(2+).

It belongs to the metallo-beta-lactamase superfamily. Glyoxalase II family. The cofactor is Zn(2+).

It catalyses the reaction an S-(2-hydroxyacyl)glutathione + H2O = a 2-hydroxy carboxylate + glutathione + H(+). It carries out the reaction (R)-S-lactoylglutathione + H2O = (R)-lactate + glutathione + H(+). It participates in secondary metabolite metabolism; methylglyoxal degradation; (R)-lactate from methylglyoxal: step 2/2. In terms of biological role, type II glyoxalase, isozyme of GloB, that hydrolyzes (R)-S-lactoylglutathione to (R)-lactate and glutathione. Plays a role in methylglyoxal (MG) detoxification. The protein is Hydroxyacylglutathione hydrolase GloC of Haemophilus influenzae (strain ATCC 51907 / DSM 11121 / KW20 / Rd).